We begin with the raw amino-acid sequence, 560 residues long: Cytosolic purine 5'-nucleotidase (560 aa).

Catalysis depends on Asp-52, which acts as the Nucleophile. 2 residues coordinate IMP: Asp-52 and Asp-54. Mg(2+)-binding residues include Asp-52 and Asp-54. Asp-54 serves as the catalytic Proton donor. ATP contacts are provided by Arg-144 and Asn-154. IMP is bound by residues Arg-202, Asp-206, Lys-215, Thr-249, Asn-250, Ser-251, and Lys-292. Asp-351 lines the Mg(2+) pocket. The residue at position 418 (Ser-418) is a Phosphoserine. ATP contacts are provided by Gln-453 and Arg-456. Phosphoserine is present on residues Ser-502, Ser-511, and Ser-527. Residues 541–560 (PQEITHCHDEDDDEEEEEEE) are disordered. Positions 548 to 560 (HDEDDDEEEEEEE) are required for tetramer assembly. Residues 550 to 560 (EDDDEEEEEEE) are compositionally biased toward acidic residues.

This sequence belongs to the 5'(3')-deoxyribonucleotidase family. As to quaternary structure, homotetramer. The cofactor is Mg(2+).

It localises to the cytoplasm. The protein resides in the cytosol. It catalyses the reaction a ribonucleoside 5'-phosphate + H2O = a ribonucleoside + phosphate. The catalysed reaction is a 2'-deoxyribonucleoside + a ribonucleoside 5'-phosphate = a ribonucleoside + a 2'-deoxyribonucleoside 5'-phosphate. It carries out the reaction IMP + H2O = inosine + phosphate. The enzyme catalyses GMP + H2O = guanosine + phosphate. It catalyses the reaction dIMP + H2O = 2'-deoxyinosine + phosphate. The catalysed reaction is dGMP + H2O = 2'-deoxyguanosine + phosphate. It carries out the reaction XMP + H2O = xanthosine + phosphate. The enzyme catalyses inosine + GMP = guanosine + IMP. It catalyses the reaction dGMP + inosine = 2'-deoxyguanosine + IMP. The catalysed reaction is dIMP + inosine = 2'-deoxyinosine + IMP. It carries out the reaction inosine + UMP = uridine + IMP. The enzyme catalyses inosine + CMP = cytidine + IMP. It catalyses the reaction inosine + AMP = IMP + adenosine. With respect to regulation, allosterically activated by various compounds including ATP, 2,3-BPG/2,3-Bisphosphoglyceric acid and Ap4A/P1,P4-bis(5'-adenosyl) tetraphosphate. Binding of an allosteric activator is a prerequisiste to magnesium and substrate binding. Inhibited by inorganic phosphate. Functionally, broad specificity cytosolic 5'-nucleotidase that catalyzes the dephosphorylation of 6-hydroxypurine nucleoside 5'-monophosphates. In addition, possesses a phosphotransferase activity by which it can transfer a phosphate from a donor nucleoside monophosphate to an acceptor nucleoside, preferably inosine, deoxyinosine and guanosine. Has the highest activities for IMP and GMP followed by dIMP, dGMP and XMP. Could also catalyze the transfer of phosphates from pyrimidine monophosphates but with lower efficiency. Through these activities regulates the purine nucleoside/nucleotide pools within the cell. This is Cytosolic purine 5'-nucleotidase from Rattus norvegicus (Rat).